The following is a 96-amino-acid chain: MVEFSHTKKIGSAGRFGPRYGRKIRVRLRDVEIKQNKEYKCPVCAFPKLKRAGTSIWVCDKCGAKIAGGAYTPETGAGKVVTKAIRRVIESKSREI.

The segment at 41 to 62 (CPVCAFPKLKRAGTSIWVCDKC) adopts a C4-type zinc-finger fold.

The protein belongs to the eukaryotic ribosomal protein eL43 family. The cofactor is Zn(2+).

The polypeptide is Large ribosomal subunit protein eL43 (Methanococcus vannielii (strain ATCC 35089 / DSM 1224 / JCM 13029 / OCM 148 / SB)).